The sequence spans 288 residues: Thymidylate synthase (288 aa).

Residue Arg-21 participates in dUMP binding. His-51 lines the (6R)-5,10-methylene-5,6,7,8-tetrahydrofolate pocket. 150–151 serves as a coordination point for dUMP; it reads RR. Residue Cys-170 is the Nucleophile of the active site. Residues 190 to 193, Asn-201, and 231 to 233 each bind dUMP; these read RSGD and HIY. Asp-193 provides a ligand contact to (6R)-5,10-methylene-5,6,7,8-tetrahydrofolate. (6R)-5,10-methylene-5,6,7,8-tetrahydrofolate is bound at residue Ala-287.

It belongs to the thymidylate synthase family. Bacterial-type ThyA subfamily. Homodimer.

The protein localises to the cytoplasm. It catalyses the reaction dUMP + (6R)-5,10-methylene-5,6,7,8-tetrahydrofolate = 7,8-dihydrofolate + dTMP. It participates in pyrimidine metabolism; dTTP biosynthesis. In terms of biological role, catalyzes the reductive methylation of 2'-deoxyuridine-5'-monophosphate (dUMP) to 2'-deoxythymidine-5'-monophosphate (dTMP) while utilizing 5,10-methylenetetrahydrofolate (mTHF) as the methyl donor and reductant in the reaction, yielding dihydrofolate (DHF) as a by-product. This enzymatic reaction provides an intracellular de novo source of dTMP, an essential precursor for DNA biosynthesis. The protein is Thymidylate synthase of Mycoplasma mobile (strain ATCC 43663 / 163K / NCTC 11711) (Mesomycoplasma mobile).